Reading from the N-terminus, the 329-residue chain is Telomeric repeat-binding factor 2-interacting protein 1 (329 aa).

A BRCT domain is found at 63-86 (AVSTDYVVACVESQRRLPLDLYRH). A Myb-like domain is found at 94-153 (ASPRGRLPFTEAEDAALLRAVRERSGAPRVSGTALWKELECTGLTRHSWQAMRDRYLRHL). Residues 179–206 (EFESSESGSDTSDTPDELPLQNGEGTFP) are disordered. The Nuclear localization signal signature appears at 313 to 329 (AKFGAENVARRVAFRKS).

Belongs to the RAP1 family. As to quaternary structure, homodimer. Component of the shelterin complex (telosome). Interacts with terf2; the interaction is direct.

Its subcellular location is the nucleus. It is found in the chromosome. The protein resides in the telomere. Its function is as follows. Acts both as a regulator of telomere function and as a transcription regulator. Involved in the regulation of telomere length and protection as a component of the shelterin complex (telosome). Does not bind DNA directly: recruited to telomeric double-stranded 5'-TTAGGG-3' repeats via its interaction with terf2. Independently of its function in telomeres, also acts as a transcription regulator: recruited to extratelomeric 5'-TTAGGG-3' sites via its association with terf2 or other factors, and regulates gene expression. This chain is Telomeric repeat-binding factor 2-interacting protein 1 (TERF2IP), found in Gallus gallus (Chicken).